A 31-amino-acid polypeptide reads, in one-letter code: Antifungal protein 1 (31 aa).

It is found in the secreted. Antifungal activity against C.albicans ATCC 76615. The protein is Antifungal protein 1 of Musca domestica (House fly).